Reading from the N-terminus, the 325-residue chain is Forkhead box protein B1 (325 aa).

A DNA-binding region (fork-head) is located at residues 12–103 (QKPPYSYISL…GDMFENGSFL (92 aa)). Positions 284 to 309 (LSNSPPSLSPTSSQTATSQSSPATPS) are enriched in low complexity. The segment at 284–325 (LSNSPPSLSPTSSQTATSQSSPATPSETLTSPASALHSVAVH) is disordered.

As to expression, expressed widespread in the early developing ventricular zone of the neural tube and later restricted to areas of the spinal cord, hindbrain, thalamus and hypothalamus. Expressed in epithelial cells of developing and adult mammary glands.

The protein localises to the nucleus. Transcription factor expressed by neural progenitor cells in specific regions of the embryonic neuroepithelium. Essential for the mammillary nuclei maintenance. Negatively regulates the proliferation of oligodendrocyte progenitors and promotes oligodendrocyte maturation. Also expressed in mammary glands, plays a role in lactation, controls development of mammary glands and the inferior colliculi of the midbrain in the central nervous system that regulates the milk-ejection reflex. This Mus musculus (Mouse) protein is Forkhead box protein B1 (Foxb1).